The primary structure comprises 229 residues: Cytidylate kinase (229 aa).

G15 to T23 provides a ligand contact to ATP.

The protein belongs to the cytidylate kinase family. Type 1 subfamily.

The protein resides in the cytoplasm. It carries out the reaction CMP + ATP = CDP + ADP. The enzyme catalyses dCMP + ATP = dCDP + ADP. This Herpetosiphon aurantiacus (strain ATCC 23779 / DSM 785 / 114-95) protein is Cytidylate kinase.